The following is a 229-amino-acid chain: Heptaprenylglyceryl phosphate synthase (229 aa).

Lysine 12 contributes to the sn-glycerol 1-phosphate binding site. 2 residues coordinate Mg(2+): aspartate 14 and serine 40. Residues 159–164 (YLEYSG), glycine 189, and 209–210 (GN) contribute to the sn-glycerol 1-phosphate site.

Belongs to the GGGP/HepGP synthase family. Group I subfamily. Homodimer. The cofactor is Mg(2+).

The catalysed reaction is sn-glycerol 1-phosphate + all-trans-heptaprenyl diphosphate = 3-heptaprenyl-sn-glycero-1-phosphate + diphosphate. It functions in the pathway membrane lipid metabolism; glycerophospholipid metabolism. In terms of biological role, prenyltransferase that catalyzes in vivo the transfer of the heptaprenyl moiety of heptaprenyl pyrophosphate (HepPP; 35 carbon atoms) to the C3 hydroxyl of sn-glycerol-1-phosphate (G1P), producing heptaprenylglyceryl phosphate (HepGP). This reaction is an ether-bond-formation step in the biosynthesis of archaea-type G1P-based membrane lipids found in Bacillales. This is Heptaprenylglyceryl phosphate synthase from Bacillus cytotoxicus (strain DSM 22905 / CIP 110041 / 391-98 / NVH 391-98).